The sequence spans 516 residues: GMP synthase [glutamine-hydrolyzing] (516 aa).

Residues 8–198 (KILILDFGSQ…VVNICGCDTL (191 aa)) enclose the Glutamine amidotransferase type-1 domain. Cys84 serves as the catalytic Nucleophile. Residues His172 and Glu174 contribute to the active site. The GMPS ATP-PPase domain maps to 199–391 (WNIENIIEND…LGLPYNMLYR (193 aa)). Position 226 to 232 (226 to 232 (SGGVDSS)) interacts with ATP.

In terms of assembly, homodimer.

The enzyme catalyses XMP + L-glutamine + ATP + H2O = GMP + L-glutamate + AMP + diphosphate + 2 H(+). Its pathway is purine metabolism; GMP biosynthesis; GMP from XMP (L-Gln route): step 1/1. Functionally, catalyzes the synthesis of GMP from XMP. This is GMP synthase [glutamine-hydrolyzing] from Francisella tularensis subsp. novicida (strain U112).